The primary structure comprises 213 residues: Small ribosomal subunit protein uS7 (213 aa).

This sequence belongs to the universal ribosomal protein uS7 family. As to quaternary structure, component of the small ribosomal subunit (SSU). Mature N.crassa ribosomes consist of a small (40S) and a large (60S) subunit. The 40S small subunit contains 1 molecule of ribosomal RNA (18S rRNA) and at least 32 different proteins. The large 60S subunit contains 3 rRNA molecules (26S, 5.8S and 5S rRNA) and at least 42 different proteins.

The protein localises to the cytoplasm. Functionally, component of the ribosome, a large ribonucleoprotein complex responsible for the synthesis of proteins in the cell. The small ribosomal subunit (SSU) binds messenger RNAs (mRNAs) and translates the encoded message by selecting cognate aminoacyl-transfer RNA (tRNA) molecules. The large subunit (LSU) contains the ribosomal catalytic site termed the peptidyl transferase center (PTC), which catalyzes the formation of peptide bonds, thereby polymerizing the amino acids delivered by tRNAs into a polypeptide chain. The nascent polypeptides leave the ribosome through a tunnel in the LSU and interact with protein factors that function in enzymatic processing, targeting, and the membrane insertion of nascent chains at the exit of the ribosomal tunnel. The chain is Small ribosomal subunit protein uS7 (rps-5) from Neurospora crassa (strain ATCC 24698 / 74-OR23-1A / CBS 708.71 / DSM 1257 / FGSC 987).